Here is a 392-residue protein sequence, read N- to C-terminus: ATP phosphoribosyltransferase regulatory subunit (392 aa).

The protein belongs to the class-II aminoacyl-tRNA synthetase family. HisZ subfamily. As to quaternary structure, heteromultimer composed of HisG and HisZ subunits.

It is found in the cytoplasm. It functions in the pathway amino-acid biosynthesis; L-histidine biosynthesis; L-histidine from 5-phospho-alpha-D-ribose 1-diphosphate: step 1/9. Its function is as follows. Required for the first step of histidine biosynthesis. May allow the feedback regulation of ATP phosphoribosyltransferase activity by histidine. The sequence is that of ATP phosphoribosyltransferase regulatory subunit from Synechococcus sp. (strain WH7803).